Consider the following 211-residue polypeptide: uncharacterized protein (211 aa).

Positions 155–211 (AAENASEEGDKKQIITDSGKLPETEELTETTNEDLDIKQFSPYSSESSANVSSYNKS) are disordered. The span at 178–188 (TEELTETTNED) shows a compositional bias: acidic residues. The span at 195–211 (SPYSSESSANVSSYNKS) shows a compositional bias: low complexity.

This is an uncharacterized protein from Schizosaccharomyces pombe (strain 972 / ATCC 24843) (Fission yeast).